Consider the following 461-residue polypeptide: Argininosuccinate lyase (461 aa).

Belongs to the lyase 1 family. Argininosuccinate lyase subfamily.

Its subcellular location is the cytoplasm. The enzyme catalyses 2-(N(omega)-L-arginino)succinate = fumarate + L-arginine. The protein operates within amino-acid biosynthesis; L-arginine biosynthesis; L-arginine from L-ornithine and carbamoyl phosphate: step 3/3. With respect to regulation, strongly inhibited by L-arginine. Inhibitory effects are lowered at pH 7.0 compared to those at pH 8.0. At 42 degrees Celsius and pH 8.0, activity decreases to 77% and 25% in the presence of 1 mM and 10 mM arginine, respectively. The other amino and organic acids do not affect activity. In terms of biological role, catalyzes the last step of arginine biosynthesis, the conversion of argininosuccinate into L-arginine and fumarate. This Nostoc sp. (strain PCC 7120 / SAG 25.82 / UTEX 2576) protein is Argininosuccinate lyase.